The primary structure comprises 416 residues: Phosphoglycerate kinase (416 aa).

Residues Val-23, Asp-24, Phe-25, Asn-26, Gln-38, Arg-39, Ser-62, His-63, Gly-65, Arg-66, Leu-121, Arg-122, His-168, and Arg-169 each coordinate (2R)-3-phosphoglycerate. Gly-212 is a binding site for ADP. CDP is bound at residue Gly-212. Positions 213 and 214 each coordinate AMP. Ala-213 provides a ligand contact to ATP. Ala-213 contacts Mg(2+). Residues Ala-216 and Asp-217 each coordinate Mg(2+). Residue Asp-217 coordinates CDP. Lys-218 contacts AMP. Lys-218 is a binding site for ATP. ADP is bound at residue Gly-236. Gly-236 serves as a coordination point for CDP. AMP-binding residues include Gly-237 and Gly-311. ATP-binding residues include Gly-237 and Gly-311. Positions 336 and 341 each coordinate CDP. Residue Phe-341 participates in ADP binding. AMP is bound at residue Glu-342. ATP-binding residues include Glu-342, Asp-373, and Thr-374. Residue Asp-373 participates in Mg(2+) binding.

It belongs to the phosphoglycerate kinase family. Monomer. The cofactor is Mg(2+).

Its subcellular location is the cytoplasm. The protein resides in the mitochondrion. The catalysed reaction is (2R)-3-phosphoglycerate + ATP = (2R)-3-phospho-glyceroyl phosphate + ADP. It participates in carbohydrate degradation; glycolysis; pyruvate from D-glyceraldehyde 3-phosphate: step 2/5. Its function is as follows. Catalyzes one of the two ATP producing reactions in the glycolytic pathway via the reversible conversion of 1,3-diphosphoglycerate to 3-phosphoglycerate. Both L- and D- forms of purine and pyrimidine nucleotides can be used as substrates, but the activity is much lower on pyrimidines. Negatively regulates the biosynthesis of acetyl-CoA from pyruvate in the mitochondrion. This is Phosphoglycerate kinase (PGK) from Kluyveromyces lactis (strain ATCC 8585 / CBS 2359 / DSM 70799 / NBRC 1267 / NRRL Y-1140 / WM37) (Yeast).